The following is a 250-amino-acid chain: Ubiquinone/menaquinone biosynthesis C-methyltransferase UbiE (250 aa).

Residues T73, D94, 122-123 (NA), and S139 each bind S-adenosyl-L-methionine.

This sequence belongs to the class I-like SAM-binding methyltransferase superfamily. MenG/UbiE family.

It carries out the reaction a 2-demethylmenaquinol + S-adenosyl-L-methionine = a menaquinol + S-adenosyl-L-homocysteine + H(+). The enzyme catalyses a 2-methoxy-6-(all-trans-polyprenyl)benzene-1,4-diol + S-adenosyl-L-methionine = a 5-methoxy-2-methyl-3-(all-trans-polyprenyl)benzene-1,4-diol + S-adenosyl-L-homocysteine + H(+). The protein operates within quinol/quinone metabolism; menaquinone biosynthesis; menaquinol from 1,4-dihydroxy-2-naphthoate: step 2/2. It participates in cofactor biosynthesis; ubiquinone biosynthesis. Functionally, methyltransferase required for the conversion of demethylmenaquinol (DMKH2) to menaquinol (MKH2) and the conversion of 2-polyprenyl-6-methoxy-1,4-benzoquinol (DDMQH2) to 2-polyprenyl-3-methyl-6-methoxy-1,4-benzoquinol (DMQH2). This Francisella tularensis subsp. tularensis (strain WY96-3418) protein is Ubiquinone/menaquinone biosynthesis C-methyltransferase UbiE.